Here is a 308-residue protein sequence, read N- to C-terminus: Protoheme IX farnesyltransferase 2 (308 aa).

9 consecutive transmembrane segments (helical) span residues Val-20–Ala-40, Ala-47–Ile-67, Ile-92–Trp-114, Leu-118–Leu-137, Val-144–Ala-164, Leu-174–Phe-194, Leu-218–Gly-238, Thr-240–Leu-260, and Gln-275–Phe-295.

The protein belongs to the UbiA prenyltransferase family. Protoheme IX farnesyltransferase subfamily.

The protein resides in the cell inner membrane. The catalysed reaction is heme b + (2E,6E)-farnesyl diphosphate + H2O = Fe(II)-heme o + diphosphate. It participates in porphyrin-containing compound metabolism; heme O biosynthesis; heme O from protoheme: step 1/1. Its function is as follows. Converts heme B (protoheme IX) to heme O by substitution of the vinyl group on carbon 2 of heme B porphyrin ring with a hydroxyethyl farnesyl side group. The chain is Protoheme IX farnesyltransferase 2 from Shewanella loihica (strain ATCC BAA-1088 / PV-4).